A 189-amino-acid chain; its full sequence is Calcyphosin (189 aa).

EF-hand domains are found at residues 21 to 56 (LGIQ…LGLV), 57 to 92 (LDTA…PMSQ), 93 to 128 (AREA…RTHP), and 136 to 172 (TEEE…VSAS). 14 residues coordinate Ca(2+): D34, D36, S38, S40, E45, D70, D72, S74, T76, E81, D106, S108, D110, and D117. S40 bears the Phosphoserine; by PKA mark.

Monomer. Does not form oligomers in the presence of calcium. Phosphorylated in response to thyrotropin and cAMP. Detected in thyroid, salivary gland, lung, brain and cerebellum (at protein level).

It localises to the cytoplasm. Calcium-binding protein. May play a role in cellular signaling events (Potential). The chain is Calcyphosin (CAPS) from Canis lupus familiaris (Dog).